Here is a 934-residue protein sequence, read N- to C-terminus: MSAHDLKLEEIVNAETLRRKLNELADTADESYTSLPMRKVVLQTLKDALASGRANAEDMLMKDGGGTLCAKRLCYLMDTLIDILFEFATTRAYPTRNPSKAENMALVAVGGYGRGGLAQGSDIDLLFLLPYKQTPWGEQVVEYTLYMLWDMGLKVGHSTRNIDECIRLAREDMTIRTALLDARFLTGDKDLFRTLEIRFEEEIVKGTEPEFIQAKLAERDARHRKAGETRYLVEPNVKEGKGGQRDLHTLFWITKYFYRVKTKEELVKLGVLSRAELKLFNKAEDFLWAVRCHMHFATLKAEERLSFDIQPEIAQRLGYTAHPGQNYVERFMKHYFLVAKDVGDLTRIICAALEEQQAKHVPGFNRIFLTFSRRKRKLSDDGAFISENHRINIARPDIFRQDPVNMIRLFHLADRHGLEFHPEAMQSLTRSLKLINADLRENPEANRLFLEILTSPRNPELILRRMNESGVLGKFIPDFGKIVAMMQFNMYHHYTVDEHLLRCIAVLSEIEHGELKTEHPLSNHLITTIKRDRNLLYVTLLLHDIAKGRPEDHSIAGARIARRLCPRFGLTPSETETVEWLVREHLTMSMVAQSRDLNDRKTIIDFADTVQTMERLKLLLILTVCDIKAVGPGIWNGWKGQLLRTLFYETELVLTGGFSELSRAARDKQAREALAERLSDWPKEERDAYLALPYTNYFLTVSLDDQVRHAHFIRDADQQGRALVTMAKPHAFEAVTEITVLAPDHPRLLSVITGACAAAGGNIVDAQIFTTSNGRALDTILISREFDTDDDERRRAERVGKVIEDVLSGKAHLPDMLAKRTKPKKAARAFKVEPRVEINNTLSNKFTVIEVEGLDRPGLLSELTGLISDLSLDIASAHITTFGEKVIDSFYVTDLVGHKISNATRQGNIKRKLLALLGAENGARTNGRSPQAAA.

The tract at residues methionine 1–serine 379 is uridylyltransferase. Residues aspartate 380–threonine 736 form a uridylyl-removing region. An HD domain is found at valine 496 to methionine 613. ACT domains are found at residues glutamate 737 to alanine 818 and valine 848 to glutamine 931.

Belongs to the GlnD family. The cofactor is Mg(2+).

It carries out the reaction [protein-PII]-L-tyrosine + UTP = [protein-PII]-uridylyl-L-tyrosine + diphosphate. It catalyses the reaction [protein-PII]-uridylyl-L-tyrosine + H2O = [protein-PII]-L-tyrosine + UMP + H(+). With respect to regulation, uridylyltransferase (UTase) activity is inhibited by glutamine, while glutamine activates uridylyl-removing (UR) activity. In terms of biological role, modifies, by uridylylation and deuridylylation, the PII regulatory proteins (GlnB and homologs), in response to the nitrogen status of the cell that GlnD senses through the glutamine level. Under low glutamine levels, catalyzes the conversion of the PII proteins and UTP to PII-UMP and PPi, while under higher glutamine levels, GlnD hydrolyzes PII-UMP to PII and UMP (deuridylylation). Thus, controls uridylylation state and activity of the PII proteins, and plays an important role in the regulation of nitrogen assimilation and metabolism. This chain is Bifunctional uridylyltransferase/uridylyl-removing enzyme, found in Brucella suis biovar 1 (strain 1330).